Here is a 242-residue protein sequence, read N- to C-terminus: Outer membrane protein class 4 (242 aa).

The first 22 residues, Met-1–Ala-22, serve as a signal peptide directing secretion. Tandem repeats lie at residues Ala-69–Pro-70, Glu-71–Pro-72, Glu-73–Pro-74, Glu-75–Pro-76, Glu-77–Pro-78, Ala-79–Pro-80, and Ala-81–Pro-82. Residues Ala-69–Pro-82 are 7 X 2 AA tandem repeats of X-P. The OmpA-like domain occupies Tyr-92–Val-229. Cys-191 and Cys-214 are disulfide-bonded.

It belongs to the outer membrane OOP (TC 1.B.6) superfamily. As to quaternary structure, the C-terminus exists in a monomer-dimer equilibrium.

The protein resides in the cell outer membrane. This Neisseria meningitidis serogroup B (strain ATCC BAA-335 / MC58) protein is Outer membrane protein class 4.